Consider the following 807-residue polypeptide: Tyrosine-protein kinase receptor torso (807 aa).

Residues 1–28 (MYSEGKLLKVFLIFAGFIIFSLCGEVVS) form the signal peptide. Residues 29–370 (QRYPPAPGLL…RAFTPGMLRW (342 aa)) lie on the Extracellular side of the membrane. Cystine bridges form between Cys-46-Cys-61, Cys-81-Cys-203, Cys-210-Cys-239, and Cys-259-Cys-265. Residues Asn-54, Asn-171, Asn-183, and Asn-195 are each glycosylated (N-linked (GlcNAc...) asparagine). N-linked (GlcNAc...) asparagine glycosylation is found at Asn-307, Asn-323, and Asn-344. Residues 371-391 (VWAGATAGAGCAAGGLLAATL) form a helical membrane-spanning segment. Residues 392 to 807 (LCCGHRRATS…SPPVIQTKTA (416 aa)) are Cytoplasmic-facing. Residues 439-738 (VLLHEVIGEG…PTFPELHQKL (300 aa)) form the Protein kinase domain. Residues 445–453 (IGEGAFGVV) and Lys-468 each bind ATP. Catalysis depends on Asp-607, which acts as the Proton acceptor.

The protein belongs to the protein kinase superfamily. Tyr protein kinase family. In terms of assembly, homodimer; disulfide-linked. Requires Mg(2+) as cofactor. Post-translationally, may be auto-phosphorylated on tyrosine residues. At least one of the 3 cysteine residues Cys-381, Cys-393 or Cys-394 is involved in the formation of interchain disulfide bonds. The disulfide bond sites in the extracellular region are not involved in homodimer formation.

The protein resides in the cell membrane. The enzyme catalyses L-tyrosyl-[protein] + ATP = O-phospho-L-tyrosyl-[protein] + ADP + H(+). Probable receptor tyrosine kinase. During postembryonic development, involved in the initiation of metamorphosis probably by inducing the production of ecdysone in response to prothoracicotropic hormone (PTTH). Binding to PTTH stimulates activation of canonical MAPK signaling leading to ERK phosphorylation. This is Tyrosine-protein kinase receptor torso from Bombyx mori (Silk moth).